Consider the following 390-residue polypeptide: uncharacterized protein (390 aa).

It belongs to the peptidase M24 family.

This is an uncharacterized protein from Sinorhizobium fredii (strain NBRC 101917 / NGR234).